We begin with the raw amino-acid sequence, 204 residues long: Uracil-DNA glycosylase (204 aa).

Aspartate 47 functions as the Proton acceptor in the catalytic mechanism.

It belongs to the uracil-DNA glycosylase (UDG) superfamily. UNG family.

The protein resides in the host nucleus. It carries out the reaction Hydrolyzes single-stranded DNA or mismatched double-stranded DNA and polynucleotides, releasing free uracil.. Its function is as follows. Excises uracil residues from the DNA which can arise as a result of misincorporation of dUMP residues by DNA polymerase or deamination of cytosines. Therefore may reduce deleterious uracil incorporation into the viral genome, particularly in terminally differentiated cells which lack DNA repair enzymes. The polypeptide is Uracil-DNA glycosylase (UL2) (Bos taurus (Bovine)).